Here is a 709-residue protein sequence, read N- to C-terminus: Nucleobase-ascorbate transporter 12 (709 aa).

The disordered stretch occupies residues 1–145; that stretch reads MSSSDPKPGP…GSGDPVRRPG (145 aa). Positions 7 to 19 are enriched in pro residues; that stretch reads KPGPKPGPWPPTP. Ser-40 is modified (phosphoserine). The segment covering 41-53 has biased composition (polar residues); it reads GETTATDSSSGQL. Composition is skewed to basic and acidic residues over residues 89-98 and 113-122; these read ETDKDKKEKP and QPVKRRRDSD. Transmembrane regions (helical) follow at residues 190–210, 218–238, 240–260, 283–303, 308–328, 329–349, 361–381, 438–458, 530–550, 551–571, 585–605, and 639–659; these read YLSMLGSLILVPLVIVPAMGG, VVSTVLFVSGITTLLHTSFGS, LPLIQGPSFVFLAPALAIINS, IIIGSAFQAVLGYSGLMSLIL, PVVVAPTVAAVGLSFYSYGFP, LVGKCLEIGVVQILLVIIFAL, IFLIYAVPLSLAITWAAAFLL, WGVPLFNWKMAFVMCVVSVIA, GACVLVIFSLVGKVGGFLASI, PQVMVASLLCFMWAMFTALGL, IIIVGLSLFFSLSVPAYFQQY, and YVMNTLLSMSMVIAFIMAVIL.

This sequence belongs to the nucleobase:cation symporter-2 (NCS2) (TC 2.A.40) family. As to expression, ubiquitous.

It localises to the cell membrane. This is Nucleobase-ascorbate transporter 12 (NAT12) from Arabidopsis thaliana (Mouse-ear cress).